Here is a 98-residue protein sequence, read N- to C-terminus: MSCYDLCRPSAPTPLANSCNEPCVRQCQDSRVVIQPSPVVVTLPGPILSSFPQNTAVGSSTSAAVGSILSEEGVPISSGGFGISGLGSRFSSRRCLPY.

Ser2 carries the N-acetylserine modification.

This sequence belongs to the avian keratin family. The avian keratins (F-ker, S-ker, C-ker and B-ker) are a complex mixture of very similar polypeptides.

The sequence is that of Feather keratin 4 from Gallus gallus (Chicken).